The chain runs to 565 residues: Phosphoenolpyruvate-protein phosphotransferase (565 aa).

The active-site Tele-phosphohistidine intermediate is the histidine 191. The phosphoenolpyruvate site is built by arginine 289 and arginine 325. Positions 427 and 451 each coordinate Mg(2+). Residues 450–451 (ND) and arginine 461 each bind phosphoenolpyruvate. Cysteine 498 serves as the catalytic Proton donor.

It belongs to the PEP-utilizing enzyme family. As to quaternary structure, homodimer. Requires Mg(2+) as cofactor.

The protein resides in the cytoplasm. The enzyme catalyses L-histidyl-[protein] + phosphoenolpyruvate = N(pros)-phospho-L-histidyl-[protein] + pyruvate. General (non sugar-specific) component of the phosphoenolpyruvate-dependent sugar phosphotransferase system (sugar PTS). This major carbohydrate active-transport system catalyzes the phosphorylation of incoming sugar substrates concomitantly with their translocation across the cell membrane. Enzyme I transfers the phosphoryl group from phosphoenolpyruvate (PEP) to the phosphoryl carrier protein (HPr). The polypeptide is Phosphoenolpyruvate-protein phosphotransferase (ptsI) (Haloferax volcanii (strain ATCC 29605 / DSM 3757 / JCM 8879 / NBRC 14742 / NCIMB 2012 / VKM B-1768 / DS2) (Halobacterium volcanii)).